A 647-amino-acid chain; its full sequence is Centrosomal protein of 72 kDa (647 aa).

LRR repeat units lie at residues 29-50, 55-76, and 77-98; these read ELQSLSIPGTYQEKITHLGHSL, GLKSLDLSRNSLVSLEGIQYLT, and ALESLNLYYNCISSLAEVFRLH. One can recognise an LRRCT domain in the interval 111–150; that stretch reads NPVVKVEPDYRLFVVHLLPKLQQLDDRPVRASERKASRLH. 2 stretches are compositionally biased toward basic and acidic residues: residues 152 to 161 and 220 to 234; these read ASEDSLDSKE and KGREADSRGSQESRH. Disordered regions lie at residues 152–176, 211–256, and 285–413; these read ASEDSLDSKESVPASLKEGRPHHPR, PPGS…RETR, and PEAS…ALPG. Phosphoserine is present on Ser237. Over residues 366–377 the composition is skewed to basic and acidic residues; it reads SLSRQDSSESRN. Position 382 is a phosphoserine (Ser382). Over residues 390–402 the composition is skewed to basic and acidic residues; it reads EEQRSRGVTDTRE. Phosphoserine is present on Ser404. Positions 476-620 form a coiled coil; that stretch reads SLALESKSLQ…AQHRAEVEQM (145 aa).

The protein belongs to the CEP72 family. Interacts with KIZ, PCM1 and CDK5RAP2.

The protein localises to the cytoplasm. It is found in the cytoskeleton. It localises to the microtubule organizing center. The protein resides in the centrosome. Its subcellular location is the centriolar satellite. In terms of biological role, involved in the recruitment of key centrosomal proteins to the centrosome. Provides centrosomal microtubule-nucleation activity on the gamma-tubulin ring complexes (gamma-TuRCs) and has critical roles in forming a focused bipolar spindle, which is needed for proper tension generation between sister chromatids. Required for localization of KIZ, AKAP9 and gamma-tubulin ring complexes (gamma-TuRCs). Involved in centriole duplication. Required for CDK5RAP22, CEP152, WDR62 and CEP63 centrosomal localization and promotes the centrosomal localization of CDK2. This is Centrosomal protein of 72 kDa (CEP72) from Homo sapiens (Human).